Here is a 937-residue protein sequence, read N- to C-terminus: Protein translocase subunit SecA (937 aa).

ATP contacts are provided by residues glutamine 87, 105-109 (GEGKT), and aspartate 494. Residues 881-937 (RGLNYIGPDEGGRASVHSDAEEYGGGTPAAAGTRRERREAARAEGKGKRGPKSRRKH) form a disordered region. Basic and acidic residues-rich tracts occupy residues 890–900 (EGGRASVHSDA) and 913–927 (TRRE…EGKG). Positions 928 to 937 (KRGPKSRRKH) are enriched in basic residues.

It belongs to the SecA family. As to quaternary structure, monomer and homodimer. Part of the essential Sec protein translocation apparatus which comprises SecA, SecYEG and auxiliary proteins SecDF. Other proteins may also be involved.

It localises to the cell membrane. Its subcellular location is the cytoplasm. The enzyme catalyses ATP + H2O + cellular proteinSide 1 = ADP + phosphate + cellular proteinSide 2.. Functionally, part of the Sec protein translocase complex. Interacts with the SecYEG preprotein conducting channel. Has a central role in coupling the hydrolysis of ATP to the transfer of proteins into and across the cell membrane, serving as an ATP-driven molecular motor driving the stepwise translocation of polypeptide chains across the membrane. This is Protein translocase subunit SecA from Nocardia farcinica (strain IFM 10152).